The chain runs to 218 residues: Cell division protein SepF (218 aa).

Residues 25-115 (DVAASTDNVI…IANRREQYQQ (91 aa)) form a disordered region. Residues 29 to 43 (STDNVIPRSQQSVRA) are compositionally biased toward polar residues. A compositionally biased stretch (basic and acidic residues) spans 47–63 (PKQEPRNNHVQQDHQAR).

It belongs to the SepF family. As to quaternary structure, homodimer. Interacts with FtsZ.

The protein resides in the cytoplasm. Functionally, cell division protein that is part of the divisome complex and is recruited early to the Z-ring. Probably stimulates Z-ring formation, perhaps through the cross-linking of FtsZ protofilaments. Its function overlaps with FtsA. The chain is Cell division protein SepF from Streptococcus pyogenes serotype M12 (strain MGAS2096).